A 304-amino-acid chain; its full sequence is Recombination-associated protein RdgC (304 aa).

It belongs to the RdgC family.

The protein resides in the cytoplasm. It is found in the nucleoid. Its function is as follows. May be involved in recombination. The protein is Recombination-associated protein RdgC of Shewanella putrefaciens (strain CN-32 / ATCC BAA-453).